A 299-amino-acid chain; its full sequence is tRNA dimethylallyltransferase (299 aa).

Residue 13–20 coordinates ATP; that stretch reads GPTASGKT. 15-20 is a binding site for substrate; the sequence is TASGKT. Residues 38-41 are interaction with substrate tRNA; it reads DSRQ.

This sequence belongs to the IPP transferase family. Monomer. It depends on Mg(2+) as a cofactor.

It catalyses the reaction adenosine(37) in tRNA + dimethylallyl diphosphate = N(6)-dimethylallyladenosine(37) in tRNA + diphosphate. In terms of biological role, catalyzes the transfer of a dimethylallyl group onto the adenine at position 37 in tRNAs that read codons beginning with uridine, leading to the formation of N6-(dimethylallyl)adenosine (i(6)A). The sequence is that of tRNA dimethylallyltransferase from Prochlorococcus marinus (strain MIT 9301).